The following is a 137-amino-acid chain: Small ribosomal subunit protein uS19 (137 aa).

Belongs to the universal ribosomal protein uS19 family.

Its function is as follows. Protein S19 forms a complex with S13 that binds strongly to the 16S ribosomal RNA. This is Small ribosomal subunit protein uS19 from Methanospirillum hungatei JF-1 (strain ATCC 27890 / DSM 864 / NBRC 100397 / JF-1).